We begin with the raw amino-acid sequence, 469 residues long: Cytochrome P450 85A1 (469 aa).

Residues 1 to 21 (MVLVAIGVVVAAAVVVSSLLL) traverse the membrane as a helical segment. Cys419 lines the heme pocket.

The protein belongs to the cytochrome P450 family. It depends on heme as a cofactor. Expressed at low levels in all the tissues, but preferentially in the leaf sheath.

It localises to the membrane. It carries out the reaction 6-deoxoteasterone + reduced [NADPH--hemoprotein reductase] + O2 = 6alpha-hydroxyteasterone + oxidized [NADPH--hemoprotein reductase] + H2O + H(+). It catalyses the reaction 6alpha-hydroxytyphasterol + reduced [NADPH--hemoprotein reductase] + O2 = teasterone + oxidized [NADPH--hemoprotein reductase] + 2 H2O + H(+). The enzyme catalyses 3-dehydro-6-deoxoteasterone + reduced [NADPH--hemoprotein reductase] + O2 = 3-dehydro-6alpha-hydroxyteasterone + oxidized [NADPH--hemoprotein reductase] + H2O + H(+). The catalysed reaction is 3-dehydro-6alpha-hydroxyteasterone + reduced [NADPH--hemoprotein reductase] + O2 = 3-dehydroteasterone + oxidized [NADPH--hemoprotein reductase] + 2 H2O + H(+). It carries out the reaction 6-deoxotyphasterol + reduced [NADPH--hemoprotein reductase] + O2 = 6alpha-hydroxytyphasterol + oxidized [NADPH--hemoprotein reductase] + H2O + H(+). It catalyses the reaction 6alpha-hydroxytyphasterol + reduced [NADPH--hemoprotein reductase] + O2 = typhasterol + oxidized [NADPH--hemoprotein reductase] + 2 H2O + H(+). The enzyme catalyses 3-dehydro-6-deoxoteasterone + 2 reduced [NADPH--hemoprotein reductase] + 2 O2 = 3-dehydroteasterone + 2 oxidized [NADPH--hemoprotein reductase] + 3 H2O + 2 H(+). The catalysed reaction is 6-deoxoteasterone + 2 reduced [NADPH--hemoprotein reductase] + 2 O2 = teasterone + 2 oxidized [NADPH--hemoprotein reductase] + 3 H2O + 2 H(+). It carries out the reaction 6-deoxotyphasterol + 2 reduced [NADPH--hemoprotein reductase] + 2 O2 = typhasterol + 2 oxidized [NADPH--hemoprotein reductase] + 3 H2O + 2 H(+). Its pathway is plant hormone biosynthesis; brassinosteroid biosynthesis. Catalyzes the C6-oxidation step in brassinosteroids biosynthesis. May convert 6-deoxoteasterone (6-deoxoTE) to teasterone (TE), 3-dehydro-6-deoxoteasterone (6-deoxo3DT, 6-deoxo3DHT) to 3-dehydroteasterone (3DT, 3-DHT), and 6-deoxotyphasterol (6-deoxoTY) to typhasterol (TY). Involved in the organization and elongation of the leaf and stem cells. Not able to convert 6-deoxocastasterone (6-deoxoCS) and castasterone (CS) to brassinolide (BL). This is Cytochrome P450 85A1 from Oryza sativa subsp. japonica (Rice).